The primary structure comprises 174 residues: UPF0336 protein MAP_3996c (174 aa).

The region spanning 11–131 is the MaoC-like domain; sequence IGSHYRAPDY…VLAEIRSEVT (121 aa).

Belongs to the UPF0336 family.

This is UPF0336 protein MAP_3996c from Mycolicibacterium paratuberculosis (strain ATCC BAA-968 / K-10) (Mycobacterium paratuberculosis).